A 190-amino-acid polypeptide reads, in one-letter code: Protein LZIC (190 aa).

The stretch at 2-63 (ASRGKTETSK…SEFNDSLKKI (62 aa)) forms a coiled coil.

The protein belongs to the CTNNBIP1 family. Does not interact with CTNNB1.

The polypeptide is Protein LZIC (Lzic) (Rattus norvegicus (Rat)).